A 353-amino-acid polypeptide reads, in one-letter code: Photosystem II D2 protein (353 aa).

T2 is modified (N-acetylthreonine). Phosphothreonine is present on T2. The helical transmembrane segment at 41 to 61 (CAYFALGGWFTGTTFVTSWYT) threads the bilayer. H118 serves as a coordination point for chlorophyll a. The chain crosses the membrane as a helical span at residues 125-141 (GFMLRQFELARSVQLRP). Positions 130 and 143 each coordinate pheophytin a. A helical transmembrane segment spans residues 153–166 (VFVSVFLIYPLGQS). H198 is a chlorophyll a binding site. Residues 208 to 228 (AALLCAIHGATVENTLFEDGD) form a helical membrane-spanning segment. A plastoquinone-binding residues include H215 and F262. H215 is a binding site for Fe cation. H269 contributes to the Fe cation binding site. Residues 279 to 295 (GLWMSALGVVGLALNLR) form a helical membrane-spanning segment.

It belongs to the reaction center PufL/M/PsbA/D family. As to quaternary structure, PSII is composed of 1 copy each of membrane proteins PsbA, PsbB, PsbC, PsbD, PsbE, PsbF, PsbH, PsbI, PsbJ, PsbK, PsbL, PsbM, PsbT, PsbX, PsbY, PsbZ, Psb30/Ycf12, at least 3 peripheral proteins of the oxygen-evolving complex and a large number of cofactors. It forms dimeric complexes. It depends on The D1/D2 heterodimer binds P680, chlorophylls that are the primary electron donor of PSII, and subsequent electron acceptors. It shares a non-heme iron and each subunit binds pheophytin, quinone, additional chlorophylls, carotenoids and lipids. There is also a Cl(-1) ion associated with D1 and D2, which is required for oxygen evolution. The PSII complex binds additional chlorophylls, carotenoids and specific lipids. as a cofactor.

Its subcellular location is the plastid. The protein resides in the chloroplast thylakoid membrane. The catalysed reaction is 2 a plastoquinone + 4 hnu + 2 H2O = 2 a plastoquinol + O2. Its function is as follows. Photosystem II (PSII) is a light-driven water:plastoquinone oxidoreductase that uses light energy to abstract electrons from H(2)O, generating O(2) and a proton gradient subsequently used for ATP formation. It consists of a core antenna complex that captures photons, and an electron transfer chain that converts photonic excitation into a charge separation. The D1/D2 (PsbA/PsbD) reaction center heterodimer binds P680, the primary electron donor of PSII as well as several subsequent electron acceptors. D2 is needed for assembly of a stable PSII complex. The protein is Photosystem II D2 protein of Morus indica (Mulberry).